We begin with the raw amino-acid sequence, 808 residues long: Auxin response factor 4 (808 aa).

The segment covering 1–13 (MPPAAMAPPPPPQ) has biased composition (pro residues). Residues 1-20 (MPPAAMAPPPPPQGSSTGDP) form a disordered region. Positions 129–231 (FCKTLTASDT…ELRVGVRRAM (103 aa)) form a DNA-binding region, TF-B3. Over residues 342–352 (PSTIPRPDRVS) the composition is skewed to basic and acidic residues. Disordered regions lie at residues 342–433 (PSTI…DSDV), 661–691 (TAGTATENEKSGQQAQQSSKDVQSKTQVAST), and 778–808 (QKMNSKSNAPRKDDSSENEKGHLPMPNKSDN). Polar residues predominate over residues 402–432 (AQAQRSQNSTVLQGQEQMTLRSNLTESNDSD). The PB1 domain maps to 692-785 (RSCTKVHKQG…EVQKMNSKSN (94 aa)). Over residues 787 to 799 (PRKDDSSENEKGH) the composition is skewed to basic and acidic residues.

The protein belongs to the ARF family. Homodimers and heterodimers. Expressed in roots, culms, leaves and young panicles.

It localises to the nucleus. Auxin response factors (ARFs) are transcriptional factors that bind specifically to the DNA sequence 5'-TGTCTC-3' found in the auxin-responsive promoter elements (AuxREs). This is Auxin response factor 4 (ARF4) from Oryza sativa subsp. japonica (Rice).